A 612-amino-acid chain; its full sequence is DEAD-box ATP-dependent RNA helicase 11 (612 aa).

Disordered stretches follow at residues 1-70 (MSAS…SGGG) and 83-104 (GAGG…WDRR). At Ser2 the chain carries N-acetylserine. Composition is skewed to gly residues over residues 61–70 (SGGGGASGGG) and 83–94 (GAGGGGGGGGGW). The Q motif signature appears at 151–179 (NTFADIDLGDALNLNIRRCKYVRPTPVQR). A Helicase ATP-binding domain is found at 182–366 (IPILLAERDL…ADFMSNYIFL (185 aa)). 195–202 (AQTGSGKT) provides a ligand contact to ATP. A DEAD box motif is present at residues 310-313 (DEAD). The 166-residue stretch at 377–542 (LITQRVEFVQ…EVPEWLTRYA (166 aa)) folds into the Helicase C-terminal domain. The tract at residues 547-583 (FGGGKKRSGGRFGGRDFRREGSYSRGGGGGGGGGGSD) is disordered. A compositionally biased stretch (basic and acidic residues) spans 559–568 (GGRDFRREGS). A compositionally biased stretch (gly residues) spans 570–583 (SRGGGGGGGGGGSD).

This sequence belongs to the DEAD box helicase family. DDX3/DED1 subfamily.

The catalysed reaction is ATP + H2O = ADP + phosphate + H(+). The chain is DEAD-box ATP-dependent RNA helicase 11 (RH11) from Arabidopsis thaliana (Mouse-ear cress).